The sequence spans 333 residues: Fructose-1,6-bisphosphatase class 1 1 (333 aa).

The Mg(2+) site is built by glutamate 81, aspartate 100, leucine 102, and aspartate 103. Substrate contacts are provided by residues 103–106 (DGSS) and asparagine 191. Residue glutamate 263 participates in Mg(2+) binding.

The protein belongs to the FBPase class 1 family. Homotetramer. Mg(2+) serves as cofactor.

It localises to the cytoplasm. The enzyme catalyses beta-D-fructose 1,6-bisphosphate + H2O = beta-D-fructose 6-phosphate + phosphate. Its pathway is carbohydrate biosynthesis; Calvin cycle. This is Fructose-1,6-bisphosphatase class 1 1 from Cereibacter sphaeroides (strain ATCC 17029 / ATH 2.4.9) (Rhodobacter sphaeroides).